The following is a 72-amino-acid chain: DNA-directed RNA polymerase subunit omega (72 aa).

It belongs to the RNA polymerase subunit omega family. As to quaternary structure, the RNAP catalytic core consists of 2 alpha, 1 beta, 1 beta' and 1 omega subunit. When a sigma factor is associated with the core the holoenzyme is formed, which can initiate transcription.

It carries out the reaction RNA(n) + a ribonucleoside 5'-triphosphate = RNA(n+1) + diphosphate. Promotes RNA polymerase assembly. Latches the N- and C-terminal regions of the beta' subunit thereby facilitating its interaction with the beta and alpha subunits. This chain is DNA-directed RNA polymerase subunit omega, found in Clostridium acetobutylicum (strain ATCC 824 / DSM 792 / JCM 1419 / IAM 19013 / LMG 5710 / NBRC 13948 / NRRL B-527 / VKM B-1787 / 2291 / W).